The chain runs to 276 residues: UPF0276 protein PA4106 (276 aa).

Belongs to the UPF0276 family.

The chain is UPF0276 protein PA4106 from Pseudomonas aeruginosa (strain ATCC 15692 / DSM 22644 / CIP 104116 / JCM 14847 / LMG 12228 / 1C / PRS 101 / PAO1).